Here is a 238-residue protein sequence, read N- to C-terminus: Probable transcriptional regulatory protein SSU05_0402 (238 aa).

This sequence belongs to the TACO1 family. YeeN subfamily.

Its subcellular location is the cytoplasm. This Streptococcus suis (strain 05ZYH33) protein is Probable transcriptional regulatory protein SSU05_0402.